The sequence spans 253 residues: MNATAIIAASGIGKRMKLANGGCKQMLEIGGFSVIYHTLKAFEQAPSIHNIYLATRAESIPLIQELAASANIGKLTAVVEGGKERQDSINNCIKAIEVKRHQSGVTPDVILVHDGARPFIQPEEIEEIARLSLLFGACVPATRPKDTIKFIGHDPEFFGETLDRNRLVQVQTPQGFRSELLMQAHQQAEAEGWYSTDDAALVERFFPQQLIKIFEMGYHNIKITTPEDILVAEAIYQQLQAHGNATSEAASAS.

The protein belongs to the IspD/TarI cytidylyltransferase family. IspD subfamily.

The enzyme catalyses 2-C-methyl-D-erythritol 4-phosphate + CTP + H(+) = 4-CDP-2-C-methyl-D-erythritol + diphosphate. It participates in isoprenoid biosynthesis; isopentenyl diphosphate biosynthesis via DXP pathway; isopentenyl diphosphate from 1-deoxy-D-xylulose 5-phosphate: step 2/6. Catalyzes the formation of 4-diphosphocytidyl-2-C-methyl-D-erythritol from CTP and 2-C-methyl-D-erythritol 4-phosphate (MEP). The polypeptide is 2-C-methyl-D-erythritol 4-phosphate cytidylyltransferase (Chlorobium chlorochromatii (strain CaD3)).